Here is a 999-residue protein sequence, read N- to C-terminus: MATIMFGSIAAEIPVIKEAIMIAMPKSKHTLHVVQVEAKHMATEIRSERGKLYVAKRFADNAIKAYDSQLKAFDELLKKNSDLQKRLFIGQNSPIKQKKGGACFVRSLSFKQAEERHAKYLKLQEEEHQFLSGAYGDKAYVGSVQGTLDRKVAEKVSFKSPYYKRTCKAVRQVKVLKKAVGSGKVLDQVLEIVAETGVPVTFVGKGANKTLRAQYVRRYGLVIPKIFLCHESGRKVHREMSYWHHKETLQYLCKHGKYGALNENALCKGDSGLLFDQRTAFVKRVTYLPHFIVRGRQEGQLVCATEYLDNVYTIEHYTHKPEEQFFKGWKQVFDKMAPHTFEHDCTIDYNNEQCGELAATICQTLFPVRKLSCNKCRHRIKDLSWEEFKQFILAHLGCCAKLWEEQKNLPGLEKIHSFVVQATSENMIFETSMEIVRLTQNYTSTHMLQIQDINKALMKGSSATQEDLKKASEQLLAMTRWWKNHMTLTNEDALKTFRNKRSSKALINPSLLCDNQLDRNGNFVWGERGRHSKRFFENFFEEVVPSEGYKKYVIRNNPNGFRKLAIDSLIVPMDLARARIALQGESIKREDLTLACVSKQDGNFVYPCCCVTQDDGRPFYSELKSPTKRHLVVGTSGDPKYIDLPATDSDRMYIAKEGYCYLNIFLAMLVNVNEDEAKDFTKMVRDVVVPKLGTWPSMMDVATAVYIMTVFHPETRSAELPRILVDHASQTMHVIDSFGSLSVGYHVLKAGTVNQLIQFASNDLEGEMKHYRVGGDAEQRMRCERALISSIFKPKKMMQILENDPYTLVLGLVSPTVLIHMFRMKHFEKGVELWINKDQSVVKIFLLLEHLTRKIAMNDVLLEQLEMISQQAGRLHEIICDCPKNIHSYRAVKDFLEVKMEAALTNKELANNGFFDINESLGHVSEKNLCKSLREGMARAKLVGKIFCNMAIEKVLKGYGRAFDKESCRRQKRIFKKICECVLHECPNTPRKCTYYNFK.

One can recognise a Peptidase S30 domain in the interval 176-317 (LKKAVGSGKV…LDNVYTIEHY (142 aa)). Catalysis depends on for P1 proteinase activity residues His230, Glu239, and Ser271. Positions 370–373 (KLSC) match the Involved in interaction with stylet and aphid transmission motif. The Involved in virions binding and aphid transmission motif lies at 626-628 (PTK). In terms of domain architecture, Peptidase C6 spans 652 to 774 (MYIAKEGYCY…EGEMKHYRVG (123 aa)). Catalysis depends on for helper component proteinase activity residues Cys660 and His733.

It belongs to the potyviridae P3N-PIPO polyprotein family. As to quaternary structure, interacts (via PIPO domain) with host PCaP1 protein; this interaction may help to anchor the movement complex to the plasma membrane from which the complex could move to the plasmodesmata. Post-translationally, potyviral RNA is expressed as two polyproteins which undergo post-translational proteolytic processing. Genome polyprotein is processed by NIa-pro, P1 and HC-pro proteinases resulting in the production of at least ten individual proteins. P3N-PIPO is cleaved by P1 and HC-pro proteinases resulting in the production of three individual proteins. The P1 proteinase and the HC-pro cleave only their respective C-termini autocatalytically.

Its subcellular location is the host cell junction. It is found in the host plasmodesma. It catalyses the reaction Hydrolyzes a Gly-|-Gly bond at its own C-terminus, commonly in the sequence -Tyr-Xaa-Val-Gly-|-Gly, in the processing of the potyviral polyprotein.. In terms of biological role, required for aphid transmission and also has proteolytic activity. Only cleaves a Gly-Gly dipeptide at its own C-terminus. Interacts with virions and aphid stylets. Acts as a suppressor of RNA-mediated gene silencing, also known as post-transcriptional gene silencing (PTGS), a mechanism of plant viral defense that limits the accumulation of viral RNAs. May have RNA-binding activity. Allows efficient cell to cell propagation, by bypassing the host cell wall barrier. Transports viral genome to neighboring plant cells directly through plasmosdesmata, without any budding. This Phaseolus vulgaris (Kidney bean) protein is P3N-PIPO polyprotein.